A 205-amino-acid polypeptide reads, in one-letter code: RNA pyrophosphohydrolase (205 aa).

A Nudix hydrolase domain is found at 6–149 (GFRPNVGIVL…KRGVYARALR (144 aa)). A Nudix box motif is present at residues 38–59 (GGMNTDETPVEAMYRELREETG). A disordered region spans residues 178 to 205 (GSSAAGHDRPRKRPRKRGGVLPVRINND). A compositionally biased stretch (basic residues) spans 186-195 (RPRKRPRKRG).

The protein belongs to the Nudix hydrolase family. RppH subfamily. Requires a divalent metal cation as cofactor.

Its function is as follows. Accelerates the degradation of transcripts by removing pyrophosphate from the 5'-end of triphosphorylated RNA, leading to a more labile monophosphorylated state that can stimulate subsequent ribonuclease cleavage. The chain is RNA pyrophosphohydrolase from Xanthomonas campestris pv. campestris (strain 8004).